The chain runs to 273 residues: Large ribosomal subunit protein uL2 (273 aa).

Positions 223–273 (VVMNPVDHPMGGGEGRSSGGRHPCTPWGVPTKGHKTRSNKSTDKYIVKRRG) are disordered. Residues 262 to 273 (KSTDKYIVKRRG) show a composition bias toward basic and acidic residues.

It belongs to the universal ribosomal protein uL2 family. Part of the 50S ribosomal subunit. Forms a bridge to the 30S subunit in the 70S ribosome.

In terms of biological role, one of the primary rRNA binding proteins. Required for association of the 30S and 50S subunits to form the 70S ribosome, for tRNA binding and peptide bond formation. It has been suggested to have peptidyltransferase activity; this is somewhat controversial. Makes several contacts with the 16S rRNA in the 70S ribosome. In Syntrophus aciditrophicus (strain SB), this protein is Large ribosomal subunit protein uL2.